A 194-amino-acid chain; its full sequence is Cation channel sperm-associated auxiliary subunit zeta (194 aa).

In terms of assembly, component of the CatSper complex or CatSpermasome composed of the core pore-forming members CATSPER1, CATSPER2, CATSPER3 and CATSPER4 as well as auxiliary members CATSPERB, CATSPERG2, CATSPERD, CATSPERE, CATSPERZ, C2CD6/CATSPERT, SLCO6C1, TMEM249, TMEM262 and EFCAB9. HSPA1 may be an additional auxiliary complex member. The core complex members CATSPER1, CATSPER2, CATSPER3 and CATSPER4 form a heterotetrameric channel. The auxiliary CATSPERB, CATSPERG2, CATSPERD and CATSPERE subunits form a pavilion-like structure over the pore which stabilizes the complex through interactions with CATSPER4, CATSPER3, CATSPER1 and CATSPER2 respectively. SLCO6C1 interacts with CATSPERE and TMEM262/CATSPERH interacts with CATSPERB, further stabilizing the complex. C2CD6/CATSPERT interacts at least with CATSPERD and is required for targeting the CatSper complex in the flagellar membrane. Interacts with EFCAB9; the interaction is direct, Ca(2+)-dependent and connects EFCAB9 with the CatSper complex. Dissociates from EFCAB9 at elevated pH. As to expression, testis-specific. Expressed in adult but not in fetal testis. Not expressed in ovary. Within testis, expression is restricted to spermatids.

The protein resides in the cell projection. The protein localises to the cilium. It localises to the flagellum membrane. Functionally, auxiliary component of the CatSper complex, a complex involved in sperm cell hyperactivation. Sperm cell hyperactivation is needed for sperm motility which is essential late in the preparation of sperm for fertilization. Required for a distribution of the CatSper complex in linear quadrilateral nanodomains along the flagellum, maximizing fertilization inside the mammalian female reproductive tract. Together with EFCAB9, associates with the CatSper channel pore and is required for the two-row structure of each single CatSper channel. The sequence is that of Cation channel sperm-associated auxiliary subunit zeta from Mus musculus (Mouse).